A 537-amino-acid polypeptide reads, in one-letter code: Cytoplasmic 60S subunit biogenesis factor REI1 homolog (537 aa).

2 consecutive C2H2-type zinc fingers follow at residues 18–42 (YTCN…SDWH) and 83–107 (KTCE…STKH). Disordered stretches follow at residues 101–151 (HLSS…AEEE) and 163–204 (SIHD…PEAL). A compositionally biased stretch (low complexity) spans 192–204 (EETPTTTPKPEAL). The C2H2-type 3 zinc-finger motif lies at 260–284 (NECLTCGKMKVNVFAIQTHMRDKSH). Over residues 312–322 (DWETEEEDKGE) the composition is skewed to acidic residues. 2 disordered regions span residues 312–361 (DWET…ASSL) and 382–401 (GKHP…ADGI). Basic and acidic residues predominate over residues 323–339 (EDGGVRLGAKRESKVVD). Positions 340–356 (ENGDEVMEDEEGWETDS) are enriched in acidic residues. Residues 383–395 (KHPHHSRENKKAH) are compositionally biased toward basic residues.

This sequence belongs to the REI1 family. As to quaternary structure, associates with nascent pre-60S particles that have not yet entered the translating pool, and is released from mature 60S subunits.

Its subcellular location is the cytoplasm. Functionally, pre-60S-associated factor involved in the cytoplasmic maturation of the 60S subunit. Involved in the dissociation and recycling of other late pre-60S factors before newly synthesized large ribosomal subunits enter translation. The chain is Cytoplasmic 60S subunit biogenesis factor REI1 homolog from Chaetomium thermophilum (strain DSM 1495 / CBS 144.50 / IMI 039719) (Thermochaetoides thermophila).